The following is a 345-amino-acid chain: GTPase Obg (345 aa).

One can recognise an Obg domain in the interval 1–158 (MFIDSVKITL…RLVRLELKLI (158 aa)). The 181-residue stretch at 159–339 (ADVGLVGFPN…LKFMLLEEIK (181 aa)) folds into the OBG-type G domain. Residues 165 to 172 (GFPNVGKS), 190 to 194 (FTTLT), 212 to 215 (DIPG), 280 to 283 (SKSD), and 320 to 322 (SSL) contribute to the GTP site. Residues serine 172 and threonine 192 each contribute to the Mg(2+) site.

It belongs to the TRAFAC class OBG-HflX-like GTPase superfamily. OBG GTPase family. In terms of assembly, monomer. It depends on Mg(2+) as a cofactor.

The protein resides in the cytoplasm. Functionally, an essential GTPase which binds GTP, GDP and possibly (p)ppGpp with moderate affinity, with high nucleotide exchange rates and a fairly low GTP hydrolysis rate. Plays a role in control of the cell cycle, stress response, ribosome biogenesis and in those bacteria that undergo differentiation, in morphogenesis control. This Campylobacter jejuni subsp. doylei (strain ATCC BAA-1458 / RM4099 / 269.97) protein is GTPase Obg.